The following is a 58-amino-acid chain: T-cell receptor gamma alternate reading frame protein (58 aa).

As to expression, detected at low levels in the ductal cells of the salivary gland but not in the acinar cells (at protein level). Expressed in endometrium (at protein level). Expressed in epithelial cells within the acinar ducts of the prostate.

This Homo sapiens (Human) protein is T-cell receptor gamma alternate reading frame protein.